A 45-amino-acid polypeptide reads, in one-letter code: Iota-conotoxin-like R11.10 (45 aa).

4 disulfides stabilise this stretch: cysteine 5–cysteine 19, cysteine 12–cysteine 22, cysteine 18–cysteine 27, and cysteine 21–cysteine 36. Leucine 43 is modified (D-leucine). A propeptide (removed by a carboxypeptidase) is located at residue arginine 45.

This sequence belongs to the conotoxin I1 superfamily. As to expression, expressed by the venom duct.

It localises to the secreted. Functionally, iota-conotoxins bind to voltage-gated sodium channels (Nav) and act as agonists by shifting the voltage-dependence of activation to more hyperpolarized levels. Produces general excitatory symptoms. The protein is Iota-conotoxin-like R11.10 of Conus radiatus (Rayed cone).